We begin with the raw amino-acid sequence, 507 residues long: Protein FAM221B (507 aa).

Disordered stretches follow at residues M1–S100, L154–P310, and E486–F507. Over residues N88–S100 the composition is skewed to polar residues. The segment covering S167–E177 has biased composition (acidic residues). Positions A182 to D193 are enriched in polar residues. Composition is skewed to acidic residues over residues P208–L222 and S270–L281. S270 carries the phosphoserine modification.

Belongs to the FAM221 family.

In Rattus norvegicus (Rat), this protein is Protein FAM221B (Fam221b).